The chain runs to 92 residues: YcgL domain-containing protein Sputcn32_1766 (92 aa).

In terms of domain architecture, YcgL spans 1–85 (MLCTVYKSTR…PQVNLLAEHK (85 aa)).

The polypeptide is YcgL domain-containing protein Sputcn32_1766 (Shewanella putrefaciens (strain CN-32 / ATCC BAA-453)).